The following is a 273-amino-acid chain: E3 ubiquitin-protein ligase SDIR1 (273 aa).

Over 1–33 the chain is Cytoplasmic; the sequence is MSFVFRGSRGDLESGFSGGFLPERRAMRVHGAR. A helical transmembrane segment spans residues 34-54; it reads PVNSNSLAFLVTVLLLFMILN. Residues 55 to 56 are Lumenal-facing; it reads SH. A helical transmembrane segment spans residues 57–77; sequence QMPPNFLLWLVLGVFLMATTL. The Cytoplasmic segment spans residues 78-273; sequence RMYATCQQLQ…EIDDDASDMV (196 aa). The RING-type; atypical zinc-finger motif lies at 211–252; sequence CSVCLEQVTVGEIVRTLPCLHQFHAGCIDPWLRQQGTCPVCK.

Interacts with ATP1/SDIRIP1. As to expression, ubiquitous.

The protein localises to the endoplasmic reticulum membrane. It catalyses the reaction S-ubiquitinyl-[E2 ubiquitin-conjugating enzyme]-L-cysteine + [acceptor protein]-L-lysine = [E2 ubiquitin-conjugating enzyme]-L-cysteine + N(6)-ubiquitinyl-[acceptor protein]-L-lysine.. E3 ubiquitin-protein ligase that acts as a positive regulator of abscisic acid-related stress signal transduction. Interacts with and ubiquitinates ATP1/SDIRIP1 to modulate ATP1/SDIRIP1 stability through the 26S proteasome pathway. Regulates abscisic acid (ABA) and salt stress responses by negatively affecting ATP1/SDIRIP1 stability. The SDIR1-ATP1/SDIRIP1 complex plays an important role in ABA signaling through the ubiquitination pathway. This Arabidopsis thaliana (Mouse-ear cress) protein is E3 ubiquitin-protein ligase SDIR1.